Reading from the N-terminus, the 240-residue chain is Probable transcriptional regulatory protein SO_3401 (240 aa).

This sequence belongs to the TACO1 family.

The protein localises to the cytoplasm. In Shewanella oneidensis (strain ATCC 700550 / JCM 31522 / CIP 106686 / LMG 19005 / NCIMB 14063 / MR-1), this protein is Probable transcriptional regulatory protein SO_3401.